The primary structure comprises 673 residues: Potassium-transporting ATPase ATP-binding subunit (673 aa).

Helical transmembrane passes span I34–L54, V65–L85, I216–M236, and I253–I273. The active-site 4-aspartylphosphate intermediate is the D304. ATP-binding positions include D341, E345, F370–S377, and K388. Residues D511 and D515 each coordinate Mg(2+). The next 3 membrane-spanning stretches (helical) occupy residues F581 to M601, A609 to M629, and V649 to I669.

Belongs to the cation transport ATPase (P-type) (TC 3.A.3) family. Type IA subfamily. The system is composed of three essential subunits: KdpA, KdpB and KdpC.

It is found in the cell membrane. It carries out the reaction K(+)(out) + ATP + H2O = K(+)(in) + ADP + phosphate + H(+). Its function is as follows. Part of the high-affinity ATP-driven potassium transport (or Kdp) system, which catalyzes the hydrolysis of ATP coupled with the electrogenic transport of potassium into the cytoplasm. This subunit is responsible for energy coupling to the transport system and for the release of the potassium ions to the cytoplasm. The sequence is that of Potassium-transporting ATPase ATP-binding subunit from Staphylococcus epidermidis (strain ATCC 35984 / DSM 28319 / BCRC 17069 / CCUG 31568 / BM 3577 / RP62A).